Here is a 578-residue protein sequence, read N- to C-terminus: MNSTLTSKMTVQDALVDNGLLGKGTRSLLMAVAITYAISWINWFFTSWQSSRAVAAAKRAGPGQLKRPPTLPSAVPVVGHIFQFLLGGHAFMSRAAKHYGLGVPVRINLATFPSYIVSGRDCVAAFLKDQGRQLSRIPRGLNYMEHAFGCPHEFVHQFKPRDDVDIEHQMHTALQTMLAGNGLEVLAGRYQTEVAHAALSTSLMGKEHEWTELPDLCSFVEDHVLEAATRALYGPHLVALNPTLARDFWTFNRRVKSMFMGVPKWLNPSAVRARDKMTDNVKRWQLYAAEHCNIDEIPDDVEWEPFYGSRYTRVRQKLLTKRDIMNESARAAENLAFIWATNANSVPSAIWFLLETLHDPSLEKQVRARLQAARTESTDENPLNFDVNKLTSDSLLQSMFAEILRLRVAALVVRQPTDAKGFSLPGGWHIKPKETLSMSTRTELMDPGVWNAGDAANPHPLDSFWAERFLVYPDDPRSGPLREPKRRFGAATNSEPYFSLDGCTWSWVPFGGGRQLCPGRHFAKCEILLTSAIFLSAFEIELLTDKLPGPDEGVYGFGTMPPNGKVPCRIRRRKIVSV.

Residues 28-48 traverse the membrane as a helical segment; sequence LLMAVAITYAISWINWFFTSW. A heme-binding site is contributed by cysteine 517.

Belongs to the cytochrome P450 family. Heme is required as a cofactor.

It localises to the membrane. The catalysed reaction is 3-O-(beta-D-glucopyranosyl)-isomotiol + 2 reduced [NADPH--hemoprotein reductase] + 2 O2 = 2-deacetoxyfuscoatroside + 2 oxidized [NADPH--hemoprotein reductase] + 2 H2O + 3 H(+). It carries out the reaction 3-O-(beta-D-glucopyranosyl)-2alpha-hydroxyisomotiol + 2 reduced [NADPH--hemoprotein reductase] + 2 O2 = 2-deacetylfuscoatroside + 2 oxidized [NADPH--hemoprotein reductase] + 2 H2O + 3 H(+). The enzyme catalyses 3-O-(beta-D-glucopyranosyl)-2alpha-acetoxyisomotiol + 2 reduced [NADPH--hemoprotein reductase] + 2 O2 = fuscoatroside + 2 oxidized [NADPH--hemoprotein reductase] + 2 H2O + 3 H(+). It catalyses the reaction isomotiol + reduced [NADPH--hemoprotein reductase] + O2 = 19beta-hydroxyisomotiol + oxidized [NADPH--hemoprotein reductase] + H2O + H(+). The catalysed reaction is 2alpha-hydroxyisomotiol + reduced [NADPH--hemoprotein reductase] + O2 = 2alpha,19beta-dihydroxyisomotiol + oxidized [NADPH--hemoprotein reductase] + H2O + H(+). It carries out the reaction 2alpha,19beta-dihydroxyisomotiol + reduced [NADPH--hemoprotein reductase] + O2 = 2alpha-hydroxyismotiol-19-one + oxidized [NADPH--hemoprotein reductase] + 2 H2O + H(+). The enzyme catalyses 2alpha-hydroxyismotiol-19-one + 2 reduced [NADPH--hemoprotein reductase] + O2 = 2-deacetyl,3-deglucopyranosyl-fuscoatroside + 2 oxidized [NADPH--hemoprotein reductase] + H2O + 3 H(+). It functions in the pathway secondary metabolite biosynthesis; terpenoid biosynthesis. Cytochrome P450 monooxygenase; part of the gene cluster that mediates the biosynthesis of the enfumafungin-type antibiotic, fuscoatroside. Within the pathway, fsoE catalyzes the oxidative cleavage of the c19-C20 bond within the E-ring, resulting in the formation of a carboxyl group and a methyl group. FsoE exhibits preferential substrate selectivity toward glycoside substrates over their aglycones. The fuscoatroside biosynthesis is initiated by the cyclization of 2,3(S)-oxidosqualene through FsoA's terpene cyclase (TC) domain, leading to the formation of the fernane skeleton isomotiol, harboring a fernane triterpene skeleton with a C8-C9 double bond. Subsequently, C2-alpha-hydroxylation mediated by fsoD results in the production of 2-alpha-hydroxy-isomotiol, which is further acetylated by fsoF. The glycosyltransferase (GT) domain of FsoA may convert isomotiol, 2-alpha-hydroxy-isomotiol, and the acetylated derivative of 2-alpha-hydroxy-isomotiol into their corresponding glycosides 3-O-(beta-D-glucopyranosyl)-isomotiol, 3-O-(beta-D-glucopyranosyl)-2-alpha-hydroxy-isomotiol, and 3-O-(beta-D-glucopyranosyl)-2-alpha-acetoxy-isomotiol, which then undergo oxidative cleavage under the action of fsoE to form s 2-deacetoxy-fuscoatroside, 2-deacetyl-fuscoatroside, and fuscoatroside, respectively. Although hydroxylation followed by acetylation of 3-O-(beta-D-glucopyranosyl)-isomotiol and 2-deacetoxy-fuscoatroside by fsoD and fsoF could not be ruled out, this process is likely to occur with difficulty due to bulky steric hindrance caused by the presence of a glycan at C3 in these compounds. Interestingly, fsoE can also utilize the aglycones isomotiol and 2-alpha-hydroxy-isomotiol as substrates to generate 19-beta-hydroxy-isomotiol and 2-alpha,19-beta-dihydroxy-isomotiol, respectively. These reactions occur with lower efficiency. Finally, fsoE can further convert 2-alpha,19-beta-dihydroxy-isomotiol into 2-alpha-hydroxy-ismotiol-19-one and 2-alpha-hydroxy-ismotiol-19-one into 2-deacetyl-3-deglucopyranosyl-fuscoatroside. The sequence is that of Cytochrome P450 monooxygenase fsoE from Humicola fuscoatra.